We begin with the raw amino-acid sequence, 93 residues long: YcgL domain-containing protein swp_2294 (93 aa).

The YcgL domain maps to 1–85 (MICAVYKSLR…PVVNLLEQHK (85 aa)).

The chain is YcgL domain-containing protein swp_2294 from Shewanella piezotolerans (strain WP3 / JCM 13877).